The chain runs to 388 residues: Chorismate synthase (388 aa).

NADP(+)-binding residues include Arg39 and Arg45. Residues 130–132, 251–252, Gly296, 311–315, and Arg337 each bind FMN; these read RSS, NA, and KPIPT.

Belongs to the chorismate synthase family. Homotetramer. The cofactor is FMNH2.

It carries out the reaction 5-O-(1-carboxyvinyl)-3-phosphoshikimate = chorismate + phosphate. It functions in the pathway metabolic intermediate biosynthesis; chorismate biosynthesis; chorismate from D-erythrose 4-phosphate and phosphoenolpyruvate: step 7/7. Catalyzes the anti-1,4-elimination of the C-3 phosphate and the C-6 proR hydrogen from 5-enolpyruvylshikimate-3-phosphate (EPSP) to yield chorismate, which is the branch point compound that serves as the starting substrate for the three terminal pathways of aromatic amino acid biosynthesis. This reaction introduces a second double bond into the aromatic ring system. The polypeptide is Chorismate synthase (Streptococcus suis (strain 98HAH33)).